Reading from the N-terminus, the 1040-residue chain is Probable starch synthase 4, chloroplastic/amyloplastic (1040 aa).

The transit peptide at 1–42 directs the protein to the chloroplast; sequence MTTKLSSFCFLTHGLAGISCEREHGSSRRFFYLPSRRLVSTS. A disordered region spans residues 43 to 142; sequence CKMRQQRGFD…KSKTAKKKGE (100 aa). 2 stretches are compositionally biased toward basic and acidic residues: residues 52–61 and 112–124; these read DSSKRQEVKK and NHADENLEKKDDI. Positions 187–466 form a coiled coil; the sequence is ELMTMIRSAE…EESKKKSRDE (280 aa). Residues Lys556, Gly559, and Asp562 each contribute to the ADP site. Trp679 and Gln680 together coordinate (1,4-alpha-D-glucosyl)n. Arg849, Lys854, Lys906, Asp908, Tyr916, Leu933, and Thr934 together coordinate ADP.

Belongs to the glycosyltransferase 1 family. Bacterial/plant glycogen synthase subfamily. Interacts with PTST2. Interacts with PII1; the interaction is essential for the initiation of starch granules biosynthesis in leaf chloroplasts. In terms of tissue distribution, expressed in leaves and flowers.

The protein resides in the plastid. The protein localises to the chloroplast. Its subcellular location is the amyloplast. It localises to the chloroplast stroma. The catalysed reaction is [(1-&gt;4)-alpha-D-glucosyl](n) + ADP-alpha-D-glucose = [(1-&gt;4)-alpha-D-glucosyl](n+1) + ADP + H(+). It functions in the pathway glycan biosynthesis; starch biosynthesis. In terms of biological role, probably involved in the priming of starch granule formation. May play a regulatory role in the control of starch accumulation in plastids. Is necessary and sufficient to establish the correct number of starch granules observed in chloroplasts. This chain is Probable starch synthase 4, chloroplastic/amyloplastic, found in Arabidopsis thaliana (Mouse-ear cress).